The primary structure comprises 198 residues: Protein XA-1 (198 aa).

Residues 1 to 18 (MFFYVLLLALMAQGWSLP) form the signal peptide. Positions 17–198 (LPQGKTGEDS…KHGQEQGKKH (182 aa)) are disordered. Positions 29-44 (FRPPSPPMGPSLPPPV) are enriched in pro residues. The span at 46-59 (HDLHRPSGHPEEFR) shows a compositional bias: basic and acidic residues. The span at 76 to 86 (GRPKRDLHHGK) shows a compositional bias: basic residues. A compositionally biased stretch (basic and acidic residues) spans 95-104 (HTGEVLHHTD). Basic residues predominate over residues 134–145 (HGRHRRDLHHGK). Positions 181–198 (NSSEEKRPKHGQEQGKKH) are enriched in basic and acidic residues.

As to expression, expressed in the periphery of the cement gland as well as in the region of the hatching gland.

Its subcellular location is the secreted. This chain is Protein XA-1, found in Xenopus laevis (African clawed frog).